Reading from the N-terminus, the 373-residue chain is Anhydro-N-acetylmuramic acid kinase (373 aa).

Residue 12–19 (GTSLDGVD) coordinates ATP.

The protein belongs to the anhydro-N-acetylmuramic acid kinase family.

It catalyses the reaction 1,6-anhydro-N-acetyl-beta-muramate + ATP + H2O = N-acetyl-D-muramate 6-phosphate + ADP + H(+). It participates in amino-sugar metabolism; 1,6-anhydro-N-acetylmuramate degradation. The protein operates within cell wall biogenesis; peptidoglycan recycling. Catalyzes the specific phosphorylation of 1,6-anhydro-N-acetylmuramic acid (anhMurNAc) with the simultaneous cleavage of the 1,6-anhydro ring, generating MurNAc-6-P. Is required for the utilization of anhMurNAc either imported from the medium or derived from its own cell wall murein, and thus plays a role in cell wall recycling. In Salmonella agona (strain SL483), this protein is Anhydro-N-acetylmuramic acid kinase.